A 124-amino-acid polypeptide reads, in one-letter code: Small ribosomal subunit protein uS12 (124 aa).

Asp-89 carries the 3-methylthioaspartic acid modification.

The protein belongs to the universal ribosomal protein uS12 family. Part of the 30S ribosomal subunit. Contacts proteins S8 and S17. May interact with IF1 in the 30S initiation complex.

Functionally, with S4 and S5 plays an important role in translational accuracy. Its function is as follows. Interacts with and stabilizes bases of the 16S rRNA that are involved in tRNA selection in the A site and with the mRNA backbone. Located at the interface of the 30S and 50S subunits, it traverses the body of the 30S subunit contacting proteins on the other side and probably holding the rRNA structure together. The combined cluster of proteins S8, S12 and S17 appears to hold together the shoulder and platform of the 30S subunit. This is Small ribosomal subunit protein uS12 from Aliivibrio fischeri (strain ATCC 700601 / ES114) (Vibrio fischeri).